Consider the following 425-residue polypeptide: Serine--tRNA ligase (425 aa).

233–235 (TAE) contacts L-serine. Position 264–266 (264–266 (RAE)) interacts with ATP. An L-serine-binding site is contributed by Glu-287. ATP is bound at residue 351–354 (EISS). Ser-387 contributes to the L-serine binding site.

Belongs to the class-II aminoacyl-tRNA synthetase family. Type-1 seryl-tRNA synthetase subfamily. As to quaternary structure, homodimer. The tRNA molecule binds across the dimer.

It is found in the cytoplasm. The enzyme catalyses tRNA(Ser) + L-serine + ATP = L-seryl-tRNA(Ser) + AMP + diphosphate + H(+). It catalyses the reaction tRNA(Sec) + L-serine + ATP = L-seryl-tRNA(Sec) + AMP + diphosphate + H(+). It functions in the pathway aminoacyl-tRNA biosynthesis; selenocysteinyl-tRNA(Sec) biosynthesis; L-seryl-tRNA(Sec) from L-serine and tRNA(Sec): step 1/1. Functionally, catalyzes the attachment of serine to tRNA(Ser). Is also able to aminoacylate tRNA(Sec) with serine, to form the misacylated tRNA L-seryl-tRNA(Sec), which will be further converted into selenocysteinyl-tRNA(Sec). The chain is Serine--tRNA ligase from Clostridium botulinum (strain Eklund 17B / Type B).